The sequence spans 290 residues: Glutamate racemase (290 aa).

Residues 32 to 33 (DS) and 64 to 65 (YG) each bind substrate. The Proton donor/acceptor role is filled by cysteine 96. 97–98 (NT) serves as a coordination point for substrate. Cysteine 208 functions as the Proton donor/acceptor in the catalytic mechanism. Residue 209–210 (TH) coordinates substrate.

This sequence belongs to the aspartate/glutamate racemases family.

It carries out the reaction L-glutamate = D-glutamate. It participates in cell wall biogenesis; peptidoglycan biosynthesis. In terms of biological role, provides the (R)-glutamate required for cell wall biosynthesis. In Sodalis glossinidius (strain morsitans), this protein is Glutamate racemase.